Here is a 538-residue protein sequence, read N- to C-terminus: Syncytin-2 (538 aa).

The N-terminal stretch at 1–15 is a signal peptide; that stretch reads MGLLLLVLILTPSLA. The Extracellular segment spans residues 16-478; the sequence is AYRHPDFPLL…GWLNWEGTWK (463 aa). Positions 43–46 match the CXXC motif; the sequence is CWLC. 3 disulfides stabilise this stretch: Cys-43-Cys-46, Cys-43-Cys-439, and Cys-431-Cys-438. Asn-133, Asn-146, Asn-177, Asn-220, Asn-241, Asn-247, Asn-312, and Asn-332 each carry an N-linked (GlcNAc...) asparagine glycan. The interval 354 to 374 is fusion peptide; the sequence is FIPLLAGLGILAGTGTGIAGI. The CKS-17 motif lies at 414-430; it reads LQNRRGLDMLTAAQGGI. Positions 431–439 match the CX6CC motif; that stretch reads CLALDEKCC. A glycan (N-linked (GlcNAc...) asparagine) is linked at Asn-443. Residues 479-499 traverse the membrane as a helical segment; that stretch reads WFSWVLPLTGPLVSLLLLLLF. Topologically, residues 500 to 538 are cytoplasmic; sequence GPCLLNLITQFVSSRLQAIKLQTNLSAGRRPRNIQESPF.

This sequence belongs to the gamma type-C retroviral envelope protein family. HERV class-I FRD env subfamily. In terms of assembly, the surface and transmembrane proteins form a heterodimer. They are attached by non-covalent interactions or by a labile interchain disulfide bond. Post-translationally, specific enzymatic cleavages in vivo yield the mature SU and TM proteins. In terms of processing, the CXXC motif is highly conserved across a broad range of retroviral envelope proteins. It is thought to participate in the formation of a labile disulfide bond possibly with the CX6CC motif present in the transmembrane protein.

It localises to the virion. Its subcellular location is the cell membrane. Functionally, this endogenous retroviral envelope protein has retained its original fusogenic properties and participates in trophoblast fusion and the formation of a syncytium during placenta morphogenesis. The interaction with MFSD2A is apparently important for this process. In terms of biological role, endogenous envelope proteins may have kept, lost or modified their original function during evolution but this one can still make pseudotypes with MLV, HIV-1 or SIV-1 virions and confer infectivity. Retroviral envelope proteins mediate receptor recognition and membrane fusion during early infection. The surface protein mediates receptor recognition, while the transmembrane protein anchors the envelope heterodimer to the viral membrane through one transmembrane domain. The other hydrophobic domain, called fusion peptide, mediates fusion of the viral membrane with the target cell membrane. This chain is Syncytin-2 (ERVFRD-1), found in Gorilla gorilla gorilla (Western lowland gorilla).